Here is a 181-residue protein sequence, read N- to C-terminus: Inner membrane-spanning protein YciB (181 aa).

5 helical membrane-spanning segments follow: residues 22 to 42 (IYTA…LTYV), 50 to 70 (MQLI…FLHD), 80 to 100 (IVYA…RPII), 118 to 138 (INYA…YVAF), and 148 to 168 (FKVF…GMYV).

It belongs to the YciB family.

The protein resides in the cell inner membrane. In terms of biological role, plays a role in cell envelope biogenesis, maintenance of cell envelope integrity and membrane homeostasis. The sequence is that of Inner membrane-spanning protein YciB from Aliivibrio salmonicida (strain LFI1238) (Vibrio salmonicida (strain LFI1238)).